A 300-amino-acid polypeptide reads, in one-letter code: Pantoate kinase (300 aa).

The protein belongs to the GHMP kinase family. PoK subfamily. As to quaternary structure, homodimer.

The catalysed reaction is (R)-pantoate + ATP = (R)-4-phosphopantoate + ADP + H(+). It functions in the pathway cofactor biosynthesis; coenzyme A biosynthesis. Moderately stimulated in the presence of potassium cations. Inhibited by increasing concentrations of pantoate. Activity is not affected by CoA/acetyl-CoA. Phosphorylates (R)-pantoate to form (R)-4-phosphopantoate in the CoA biosynthesis pathway. Displays broad nucleotide specificity and utilizes ATP, GTP, UTP, and CTP with comparable catalytic efficiencies. The chain is Pantoate kinase from Thermococcus kodakarensis (strain ATCC BAA-918 / JCM 12380 / KOD1) (Pyrococcus kodakaraensis (strain KOD1)).